We begin with the raw amino-acid sequence, 480 residues long: Probable cytosol aminopeptidase (480 aa).

Lys-248 and Asp-253 together coordinate Mn(2+). Residue Lys-260 is part of the active site. Asp-271, Asp-330, and Glu-332 together coordinate Mn(2+). Arg-334 is a catalytic residue.

This sequence belongs to the peptidase M17 family. Mn(2+) serves as cofactor.

The protein localises to the cytoplasm. It carries out the reaction Release of an N-terminal amino acid, Xaa-|-Yaa-, in which Xaa is preferably Leu, but may be other amino acids including Pro although not Arg or Lys, and Yaa may be Pro. Amino acid amides and methyl esters are also readily hydrolyzed, but rates on arylamides are exceedingly low.. It catalyses the reaction Release of an N-terminal amino acid, preferentially leucine, but not glutamic or aspartic acids.. Presumably involved in the processing and regular turnover of intracellular proteins. Catalyzes the removal of unsubstituted N-terminal amino acids from various peptides. This chain is Probable cytosol aminopeptidase, found in Solibacter usitatus (strain Ellin6076).